The primary structure comprises 674 residues: DNA ligase (674 aa).

Residues 42–46 (DNVYD), 91–92 (SM), and E121 each bind NAD(+). Catalysis depends on K123, which acts as the N6-AMP-lysine intermediate. Residues R144, E178, K294, and K318 each coordinate NAD(+). Zn(2+) contacts are provided by C412, C415, C430, and C435. The BRCT domain occupies 596–674 (VKDSFVAGKT…ETELLANLKD (79 aa)).

This sequence belongs to the NAD-dependent DNA ligase family. LigA subfamily. Mg(2+) is required as a cofactor. Mn(2+) serves as cofactor.

The enzyme catalyses NAD(+) + (deoxyribonucleotide)n-3'-hydroxyl + 5'-phospho-(deoxyribonucleotide)m = (deoxyribonucleotide)n+m + AMP + beta-nicotinamide D-nucleotide.. Its function is as follows. DNA ligase that catalyzes the formation of phosphodiester linkages between 5'-phosphoryl and 3'-hydroxyl groups in double-stranded DNA using NAD as a coenzyme and as the energy source for the reaction. It is essential for DNA replication and repair of damaged DNA. The sequence is that of DNA ligase from Lacticaseibacillus casei (strain BL23) (Lactobacillus casei).